Here is a 296-residue protein sequence, read N- to C-terminus: 4-diphosphocytidyl-2-C-methyl-D-erythritol kinase (296 aa).

Residue K13 is part of the active site. 104–114 (PMGGGIGGGSS) is an ATP binding site. The active site involves D146.

It belongs to the GHMP kinase family. IspE subfamily.

The enzyme catalyses 4-CDP-2-C-methyl-D-erythritol + ATP = 4-CDP-2-C-methyl-D-erythritol 2-phosphate + ADP + H(+). It functions in the pathway isoprenoid biosynthesis; isopentenyl diphosphate biosynthesis via DXP pathway; isopentenyl diphosphate from 1-deoxy-D-xylulose 5-phosphate: step 3/6. Catalyzes the phosphorylation of the position 2 hydroxy group of 4-diphosphocytidyl-2C-methyl-D-erythritol. The chain is 4-diphosphocytidyl-2-C-methyl-D-erythritol kinase from Hahella chejuensis (strain KCTC 2396).